A 76-amino-acid chain; its full sequence is Kappa-actitoxin-Avd4m (76 aa).

Residues 1-19 form the signal peptide; sequence MNKALFLCLVVLCAAVVFA. The propeptide occupies 20-31; the sequence is AEDLQKAKHAPF. 3 disulfides stabilise this stretch: Cys37–Cys72, Cys39–Cys65, and Cys55–Cys73.

It belongs to the sea anemone type 3 (BDS) potassium channel toxin family. Weakly expressed in the ectodermal tissue from the distal and proximal tentacles, body wall, and oral disk.

Its subcellular location is the secreted. It localises to the nematocyst. Blocks Kv3 voltage-gated potassium channels. Reduces blood pressure. This chain is Kappa-actitoxin-Avd4m, found in Anemonia viridis (Snakelocks anemone).